Here is a 213-residue protein sequence, read N- to C-terminus: Bcl-2-related ovarian killer protein (213 aa).

The short motif at 32-44 (KALCRDYINSRLI) is the BH4 element. The short motif at 67–83 (VSAILLRLGDELEYIRP) is the BH3 element. The short motif at 113 to 132 (QIFTAGITWGKVVSLYAVAA) is the BH1 element. The BH2 signature appears at 165–179 (WLKRRGGWADITKCV). The helical transmembrane segment at 190–210 (WLVAAVCSFGHFLKAIFFVLL) threads the bilayer.

It belongs to the Bcl-2 family.

The protein localises to the membrane. Functionally, may play a role in apoptosis. The chain is Bcl-2-related ovarian killer protein from Gallus gallus (Chicken).